Here is a 183-residue protein sequence, read N- to C-terminus: Akirin-1B (183 aa).

The disordered stretch occupies residues 14 to 43; it reads EALMSPQSPKRRRCAPLPGSPATPSPQRCG. The SYVS motif signature appears at 180–183; the sequence is SYVS.

Belongs to the akirin family.

Its subcellular location is the nucleus. Functionally, molecular adapter that acts as a bridge between proteins, and which is involved skeletal muscle development. Functions as a signal transducer for MSTN during skeletal muscle regeneration and myogenesis. In Xenopus laevis (African clawed frog), this protein is Akirin-1B (akirin1-b).